We begin with the raw amino-acid sequence, 116 residues long: Protein V2 (116 aa).

This sequence belongs to the geminiviridae protein AV2/V2 family. As to quaternary structure, interacts with host SGS3.

Its subcellular location is the host cytoplasm. It localises to the host perinuclear region. Its function is as follows. Through its interaction with host SGS3, acts as a suppressor of RNA-mediated gene silencing, also known as post-transcriptional gene silencing (PTGS), a mechanism of plant viral defense that limits the accumulation of viral RNAs. In Tomato yellow leaf curl virus (strain Israel) (TYLCV), this protein is Protein V2.